The primary structure comprises 325 residues: Lipoyl synthase (325 aa).

Positions 1–33 (MATVIDTLKARGSEDRAARHPEKQNRPDTPVLR) are disordered. Residues 8–33 (LKARGSEDRAARHPEKQNRPDTPVLR) are compositionally biased toward basic and acidic residues. Residues cysteine 64, cysteine 69, cysteine 75, cysteine 90, cysteine 94, cysteine 97, and serine 303 each contribute to the [4Fe-4S] cluster site. The Radical SAM core domain maps to 76–292 (WSQKHATMMI…EAIARAKGFL (217 aa)).

Belongs to the radical SAM superfamily. Lipoyl synthase family. Requires [4Fe-4S] cluster as cofactor.

It is found in the cytoplasm. The catalysed reaction is [[Fe-S] cluster scaffold protein carrying a second [4Fe-4S](2+) cluster] + N(6)-octanoyl-L-lysyl-[protein] + 2 oxidized [2Fe-2S]-[ferredoxin] + 2 S-adenosyl-L-methionine + 4 H(+) = [[Fe-S] cluster scaffold protein] + N(6)-[(R)-dihydrolipoyl]-L-lysyl-[protein] + 4 Fe(3+) + 2 hydrogen sulfide + 2 5'-deoxyadenosine + 2 L-methionine + 2 reduced [2Fe-2S]-[ferredoxin]. It participates in protein modification; protein lipoylation via endogenous pathway; protein N(6)-(lipoyl)lysine from octanoyl-[acyl-carrier-protein]: step 2/2. Functionally, catalyzes the radical-mediated insertion of two sulfur atoms into the C-6 and C-8 positions of the octanoyl moiety bound to the lipoyl domains of lipoate-dependent enzymes, thereby converting the octanoylated domains into lipoylated derivatives. In Caulobacter vibrioides (strain ATCC 19089 / CIP 103742 / CB 15) (Caulobacter crescentus), this protein is Lipoyl synthase.